A 347-amino-acid chain; its full sequence is Anthranilate phosphoribosyltransferase (347 aa).

Residues Gly-88, 91 to 92, Thr-96, 98 to 101, 116 to 124, and Ser-128 each bind 5-phospho-alpha-D-ribose 1-diphosphate; these read GD, NIST, and KHGGRSVSS. Gly-88 is an anthranilate binding site. Residue Ser-100 coordinates Mg(2+). Anthranilate is bound at residue Arg-174. 2 residues coordinate Mg(2+): Asp-233 and Glu-234.

Belongs to the anthranilate phosphoribosyltransferase family. In terms of assembly, homodimer. The cofactor is Mg(2+).

It carries out the reaction N-(5-phospho-beta-D-ribosyl)anthranilate + diphosphate = 5-phospho-alpha-D-ribose 1-diphosphate + anthranilate. The protein operates within amino-acid biosynthesis; L-tryptophan biosynthesis; L-tryptophan from chorismate: step 2/5. Functionally, catalyzes the transfer of the phosphoribosyl group of 5-phosphorylribose-1-pyrophosphate (PRPP) to anthranilate to yield N-(5'-phosphoribosyl)-anthranilate (PRA). The chain is Anthranilate phosphoribosyltransferase from Polaromonas sp. (strain JS666 / ATCC BAA-500).